A 205-amino-acid chain; its full sequence is Outer-membrane lipoprotein LolB (205 aa).

Positions 1–17 (MFLRHVIVFSLIALLTG) are cleaved as a signal peptide. Residue Cys-18 is the site of N-palmitoyl cysteine attachment. The S-diacylglycerol cysteine moiety is linked to residue Cys-18.

It belongs to the LolB family. Monomer.

Its subcellular location is the cell outer membrane. Functionally, plays a critical role in the incorporation of lipoproteins in the outer membrane after they are released by the LolA protein. The sequence is that of Outer-membrane lipoprotein LolB from Pseudomonas syringae pv. syringae (strain B728a).